A 350-amino-acid polypeptide reads, in one-letter code: 3-isopropylmalate dehydrogenase (350 aa).

71–84 contacts NAD(+); it reads GPKWADAPRHLRPE. 4 residues coordinate substrate: Arg-91, Arg-101, Arg-129, and Asp-220. Mg(2+) contacts are provided by Asp-220, Asp-244, and Asp-248. 279 to 291 is a binding site for NAD(+); it reads GSAPDIAGKGLAN.

Belongs to the isocitrate and isopropylmalate dehydrogenases family. LeuB type 1 subfamily. Homodimer. It depends on Mg(2+) as a cofactor. The cofactor is Mn(2+).

Its subcellular location is the cytoplasm. The enzyme catalyses (2R,3S)-3-isopropylmalate + NAD(+) = 4-methyl-2-oxopentanoate + CO2 + NADH. It participates in amino-acid biosynthesis; L-leucine biosynthesis; L-leucine from 3-methyl-2-oxobutanoate: step 3/4. Its function is as follows. Catalyzes the oxidation of 3-carboxy-2-hydroxy-4-methylpentanoate (3-isopropylmalate) to 3-carboxy-4-methyl-2-oxopentanoate. The product decarboxylates to 4-methyl-2 oxopentanoate. This chain is 3-isopropylmalate dehydrogenase, found in Caulobacter vibrioides (strain ATCC 19089 / CIP 103742 / CB 15) (Caulobacter crescentus).